We begin with the raw amino-acid sequence, 133 residues long: DNA-directed RNA polymerases I and III subunit RPAC2 (133 aa).

The residue at position 1 (Met1) is an N-acetylmethionine.

The protein belongs to the archaeal Rpo11/eukaryotic RPB11/RPC19 RNA polymerase subunit family. As to quaternary structure, component of the RNA polymerase I and RNA polymerase III complexes consisting of at least 13 and 17 subunits, respectively. Pol I complex consists of a ten-subunit catalytic core composed of POLR1A/RPA1, POLR1B/RPA2, POLR1C/RPAC1, POLR1D/RPAC2, POLR1H/RPA12, POLR2E/RPABC1, POLR2F/RPABC2, POLR2H/RPABC3, POLR2K/RPABC4 and POLR2L/RPABC5; a mobile stalk subunit POLR1F/RPA43 protruding from the core and additional subunits homologous to general transcription factors POLR1E/RPA49 and POLR1G/RPA34. Part of Pol I pre-initiation complex (PIC), in which Pol I core assembles with RRN3 and promoter-bound UTBF and SL1/TIF-IB complex. Pol III complex consists of a ten-subunit catalytic core composed of POLR3A/RPC1, POLR3B/RPC2, POLR1C/RPAC1, POLR1D/RPAC2, POLR3K/RPC10, POLR2E/RPABC1, POLR2F/RPABC2, POLR2H/RPABC3, POLR2K/RPABC4 and POLR2L/RPABC5; a mobile stalk composed of two subunits POLR3H/RPC8 and CRCP/RPC9, protruding from the core and functioning primarily in transcription initiation; and additional subunits homologous to general transcription factors of the RNA polymerase II machinery, POLR3C/RPC3-POLR3F/RPC6-POLR3G/RPC7 heterotrimer required for transcription initiation and POLR3D/RPC4-POLR3E/RPC5 heterodimer involved in both transcription initiation and termination.

The protein resides in the nucleus. Its subcellular location is the nucleolus. In terms of biological role, DNA-dependent RNA polymerase catalyzes the transcription of DNA into RNA using the four ribonucleoside triphosphates as substrates. Common component of RNA polymerases I and III which synthesize ribosomal RNA precursors and short non-coding RNAs including 5S rRNA, snRNAs, tRNAs and miRNAs, respectively. The sequence is that of DNA-directed RNA polymerases I and III subunit RPAC2 from Homo sapiens (Human).